Here is a 525-residue protein sequence, read N- to C-terminus: GMP synthase [glutamine-hydrolyzing] (525 aa).

The 199-residue stretch at 9-207 (RILILDFGSQ…VLDICACEAL (199 aa)) folds into the Glutamine amidotransferase type-1 domain. The active-site Nucleophile is the Cys-86. Catalysis depends on residues His-181 and Glu-183. A GMPS ATP-PPase domain is found at 208 to 400 (WTPATIIEDA…LGLPYDMLYR (193 aa)). An ATP-binding site is contributed by 235-241 (SGGVDSS).

Homodimer.

It carries out the reaction XMP + L-glutamine + ATP + H2O = GMP + L-glutamate + AMP + diphosphate + 2 H(+). Its pathway is purine metabolism; GMP biosynthesis; GMP from XMP (L-Gln route): step 1/1. Catalyzes the synthesis of GMP from XMP. This is GMP synthase [glutamine-hydrolyzing] from Yersinia enterocolitica serotype O:8 / biotype 1B (strain NCTC 13174 / 8081).